The chain runs to 309 residues: Porphobilinogen deaminase (309 aa).

S-(dipyrrolylmethanemethyl)cysteine is present on Cys241.

It belongs to the HMBS family. Monomer. Dipyrromethane is required as a cofactor.

It catalyses the reaction 4 porphobilinogen + H2O = hydroxymethylbilane + 4 NH4(+). Its pathway is porphyrin-containing compound metabolism; protoporphyrin-IX biosynthesis; coproporphyrinogen-III from 5-aminolevulinate: step 2/4. In terms of biological role, tetrapolymerization of the monopyrrole PBG into the hydroxymethylbilane pre-uroporphyrinogen in several discrete steps. The protein is Porphobilinogen deaminase of Bacillus cereus (strain AH187).